The sequence spans 249 residues: MAPSRKFFVGGNWKMNGRKQSLGELIGTLNAAKVPADTEVVCAPPTAYIDFARQKLDPKIAVAAQNCYKVTNGAFTGEISPGMIKDCGATWVVLGHSERRHVFGESDELIGQKVAHALAEGLGVIACIGEKLDEREAGITEKVVFEQTKVIADNVKDWSKVVLAYEPVWAIGTGKTATPQQAQEVHEKLRGWLKSNVSDAVAQSTRIIYGGSVTGATCKELASQPDVDGFLVGGASLKPEFVDIINAKQ.

The substrate site is built by N12 and K14. Residue K14 is modified to N6-acetyllysine. A Phosphoserine modification is found at S21. The residue at position 68 (Y68) is a 3'-nitrotyrosine. The residue at position 80 (S80) is a Phosphoserine. The Electrophile role is filled by H96. The residue at position 106 (S106) is a Phosphoserine. K142 is covalently cross-linked (Glycyl lysine isopeptide (Lys-Gly) (interchain with G-Cter in SUMO1)). K149 bears the N6-succinyllysine mark. N6-acetyllysine; alternate is present on K156. K156 carries the N6-succinyllysine; alternate modification. A Phosphoserine modification is found at S159. The active-site Proton acceptor is the E166. Residue T173 is modified to Phosphothreonine. N6-acetyllysine; alternate is present on K194. K194 bears the N6-succinyllysine; alternate mark. Residue K194 is modified to N6-methyllysine; alternate. S198 is modified (phosphoserine). Y209 is subject to 3'-nitrotyrosine. Residue S212 is modified to Phosphoserine. Phosphothreonine is present on T214. S223 carries the phosphoserine modification. K238 bears the N6-acetyllysine mark.

This sequence belongs to the triosephosphate isomerase family. As to quaternary structure, homodimer.

The protein localises to the cytoplasm. The enzyme catalyses D-glyceraldehyde 3-phosphate = dihydroxyacetone phosphate. The catalysed reaction is dihydroxyacetone phosphate = methylglyoxal + phosphate. It functions in the pathway carbohydrate degradation; glycolysis; D-glyceraldehyde 3-phosphate from glycerone phosphate: step 1/1. The protein operates within carbohydrate biosynthesis; gluconeogenesis. Triosephosphate isomerase is an extremely efficient metabolic enzyme that catalyzes the interconversion between dihydroxyacetone phosphate (DHAP) and D-glyceraldehyde-3-phosphate (G3P) in glycolysis and gluconeogenesis. Its function is as follows. It is also responsible for the non-negligible production of methylglyoxal a reactive cytotoxic side-product that modifies and can alter proteins, DNA and lipids. This Homo sapiens (Human) protein is Triosephosphate isomerase (TPI1).